The primary structure comprises 262 residues: uncharacterized protein (262 aa).

The next 7 membrane-spanning stretches (helical) occupy residues 42-62 (IAKF…TVLN), 71-91 (IINI…LLYF), 115-135 (IGLA…MELI), 145-165 (VVSY…CCFN), 185-205 (LWAY…YSNH), 206-226 (PLMI…PFMI), and 235-255 (AYPS…NYAI).

It is found in the membrane. This is an uncharacterized protein from Acanthamoeba polyphaga mimivirus (APMV).